A 69-amino-acid polypeptide reads, in one-letter code: Small, acid-soluble spore protein 1 (69 aa).

This sequence belongs to the alpha/beta-type SASP family.

In terms of biological role, SASP are bound to spore DNA. They are double-stranded DNA-binding proteins that cause DNA to change to an a-like conformation. They protect the DNA backbone from chemical and enzymatic cleavage and are thus involved in dormant spore's high resistance to UV light. The sequence is that of Small, acid-soluble spore protein 1 (Su-1) from Sporosarcina ureae.